A 272-amino-acid polypeptide reads, in one-letter code: Interleukin-2 receptor subunit alpha (272 aa).

Residues 1-21 form the signal peptide; that stretch reads MDPYLLMWGLLTFITVPGCQA. The Sushi 1 domain maps to 22 to 84; sequence ELCDDDPPKI…SWDNQCQCTS (63 aa). Over 22–240 the chain is Extracellular; the sequence is ELCDDDPPKI…ETFIFTTEYQ (219 aa). Disulfide bonds link Cys24–Cys67, Cys49–Cys80, and Cys51–Cys82. N-linked (GlcNAc...) asparagine glycans are attached at residues Asn70 and Asn89. Positions 87 to 98 are enriched in polar residues; it reads ARNTTKQVTPQP. Residues 87-109 are disordered; sequence ARNTTKQVTPQPEEQKERKTTEM. Positions 123-186 constitute a Sushi 2 domain; the sequence is GHCREPPPWE…WTQPQLICTG (64 aa). 2 disulfides stabilise this stretch: Cys125/Cys168 and Cys152/Cys184. Positions 186–213 are disordered; sequence GETEPSQFPGEEEPQASPDGLPESETSR. A helical transmembrane segment spans residues 241–259; that stretch reads VAVAGCVFLLISVLLLSGL. Topologically, residues 260 to 272 are cytoplasmic; that stretch reads TWQRRQRKNRRTI.

As to quaternary structure, non-covalent dimer of an alpha and a beta subunit. IL2R exists in 3 different forms: a high affinity dimer, an intermediate affinity monomer (beta subunit), and a low affinity monomer (alpha subunit). The high and intermediate affinity forms also associate with a gamma subunit.

Its subcellular location is the membrane. Its function is as follows. Receptor for interleukin-2. The receptor is involved in the regulation of immune tolerance by controlling regulatory T cells (TREGs) activity. TREGs suppress the activation and expansion of autoreactive T-cells. This Macaca mulatta (Rhesus macaque) protein is Interleukin-2 receptor subunit alpha (IL2RA).